The primary structure comprises 208 residues: Protein-L-isoaspartate O-methyltransferase (208 aa).

The active site involves serine 59.

The protein belongs to the methyltransferase superfamily. L-isoaspartyl/D-aspartyl protein methyltransferase family.

The protein localises to the cytoplasm. It carries out the reaction [protein]-L-isoaspartate + S-adenosyl-L-methionine = [protein]-L-isoaspartate alpha-methyl ester + S-adenosyl-L-homocysteine. Its function is as follows. Catalyzes the methyl esterification of L-isoaspartyl residues in peptides and proteins that result from spontaneous decomposition of normal L-aspartyl and L-asparaginyl residues. It plays a role in the repair and/or degradation of damaged proteins. This chain is Protein-L-isoaspartate O-methyltransferase, found in Cronobacter sakazakii (strain ATCC BAA-894) (Enterobacter sakazakii).